We begin with the raw amino-acid sequence, 469 residues long: C4b-binding protein (469 aa).

The signal sequence occupies residues 1–56 (MCAKQQQTLLPTRAAHGRLHRNRDAVAWPFSTLCRVSGPTLFQMTFTAALWVAVFG). Sushi domains follow at residues 57–117 (KCGP…SCAK), 118–178 (KHCR…ECVI), 179–242 (VKCG…TCEK), 243–301 (IICS…TCEF), 302–357 (DCDL…QCKA), and 358–415 (LCQK…RCEQ). 12 disulfides stabilise this stretch: C58–C103, C88–C115, C120–C160, C146–C176, C181–C223, C209–C240, C245–C287, C273–C299, C303–C343, C329–C355, C359–C400, and C386–C413. N-linked (GlcNAc...) asparagine glycosylation is present at N74. N-linked (GlcNAc...) asparagine glycans are attached at residues N227, N275, and N292. N-linked (GlcNAc...) asparagine glycosylation is found at N366 and N381. An N-linked (GlcNAc...) asparagine glycan is attached at N428.

Homoheptamer; not covalently linked. Mouse lacks the beta chain of C4BP.

It is found in the secreted. Its function is as follows. Controls the classical pathway of complement activation. It binds as a cofactor to C3b/C4b inactivator (C3bINA), which then hydrolyzes the complement fragment C4b. It also accelerates the degradation of the C4bC2a complex (C3 convertase) by dissociating the complement fragment C2a. Alpha chain binds C4b. It also interacts with serum amyloid P component. The polypeptide is C4b-binding protein (C4bpa) (Mus musculus (Mouse)).